Consider the following 138-residue polypeptide: Prefoldin subunit alpha (138 aa).

The protein belongs to the prefoldin subunit alpha family. As to quaternary structure, heterohexamer of two alpha and four beta subunits.

Its subcellular location is the cytoplasm. Functionally, molecular chaperone capable of stabilizing a range of proteins. Seems to fulfill an ATP-independent, HSP70-like function in archaeal de novo protein folding. This Methanococcoides burtonii (strain DSM 6242 / NBRC 107633 / OCM 468 / ACE-M) protein is Prefoldin subunit alpha.